Reading from the N-terminus, the 238-residue chain is Small ribosomal subunit protein uS2 (238 aa).

Belongs to the universal ribosomal protein uS2 family.

This is Small ribosomal subunit protein uS2 from Chloroflexus aggregans (strain MD-66 / DSM 9485).